The sequence spans 153 residues: Ribosome maturation factor RimP (153 aa).

The protein belongs to the RimP family.

It is found in the cytoplasm. Functionally, required for maturation of 30S ribosomal subunits. This chain is Ribosome maturation factor RimP, found in Clostridium botulinum (strain Loch Maree / Type A3).